A 190-amino-acid chain; its full sequence is Elongation factor P 2 (190 aa).

Belongs to the elongation factor P family.

It localises to the cytoplasm. Its pathway is protein biosynthesis; polypeptide chain elongation. Involved in peptide bond synthesis. Stimulates efficient translation and peptide-bond synthesis on native or reconstituted 70S ribosomes in vitro. Probably functions indirectly by altering the affinity of the ribosome for aminoacyl-tRNA, thus increasing their reactivity as acceptors for peptidyl transferase. The sequence is that of Elongation factor P 2 (efp2) from Chlamydia muridarum (strain MoPn / Nigg).